A 222-amino-acid chain; its full sequence is Ribonuclease HII (222 aa).

The 191-residue stretch at Phe-32 to Ser-222 folds into the RNase H type-2 domain. A divalent metal cation-binding residues include Asp-38, Glu-39, and Asp-130.

It belongs to the RNase HII family. Mn(2+) serves as cofactor. The cofactor is Mg(2+).

Its subcellular location is the cytoplasm. It catalyses the reaction Endonucleolytic cleavage to 5'-phosphomonoester.. Its function is as follows. Endonuclease that specifically degrades the RNA of RNA-DNA hybrids. The sequence is that of Ribonuclease HII from Bartonella bacilliformis (strain ATCC 35685 / KC583 / Herrer 020/F12,63).